The following is a 424-amino-acid chain: MDQPSGRSFMQVLCEKYSPENFPYRRGPGMGVHVPATPQGSPMKDRLNLPSVLVLNSCGITCAGDEKEIAAFCAHVSELDLSDNKLEDWHEVSKIVSNVPQLEFLNLSSNPLNLSVLERTCAGSFSGVRKLVLNNSKASWETVHMILQELPDLEELFLCLNDYETVSCPSICCHSLKLLHITDNNLQDWTEIRKLGVMFPSLDTLVLANNHLNAIEEPDDSLARLFPNLRSISLHKSGLQSWEDIDKLNSFPKLEEVRLLGIPLLQPYTTEERRKLVIARLPSVSKLNGSVVTDGEREDSERFFIRYYVDVPQEEVPFRYHELITKYGKLEPLAEVDLRPQSSAKVEVHFNDQVEEMSIRLDQTVAELKKQLKTLVQLPTSNMLLYYFDHEAPFGPEEMKYSSRALHSFGIRDGDKIYVESKTK.

A phosphoserine mark is found at serine 18 and serine 41. LRR repeat units follow at residues 73–98 (CAHV…IVSN), 99–123 (VPQL…TCAG), 124–147 (SFSG…HMIL), 150–172 (LPDL…PSIC), 173–197 (CHSL…KLGV), 199–224 (FPSL…SLAR), and 226–250 (FPNL…KLNS). Positions 262 to 303 (IPLLQPYTTEERRKLVIARLPSVSKLNGSVVTDGEREDSERF) constitute an LRRCT domain. The Ubiquitin-like domain maps to 334-424 (AEVDLRPQSS…DKIYVESKTK (91 aa)). Positions 349-375 (HFNDQVEEMSIRLDQTVAELKKQLKTL) form a coiled coil.

As to expression, abundantly expressed in testis, but is also present in several tissues at a much lower level.

It localises to the cytoplasm. The protein resides in the cytoskeleton. In terms of biological role, acts as a regulator of tubulin stability. This Homo sapiens (Human) protein is Tubulin-specific chaperone cofactor E-like protein (TBCEL).